We begin with the raw amino-acid sequence, 692 residues long: Ribonuclease R (692 aa).

Positions 204 to 525 (RKDLRDLLCF…IVHRLLFHPL (322 aa)) constitute an RNB domain. Residues 563-648 (KKFLDEQPAT…LTQAIEWTLI (86 aa)) enclose the S1 motif domain. Residues 651–692 (KERSSSKKKKAKAKSNATQVKKKSSSKKKKAVSKAKKNRGGK) form a disordered region. Basic residues predominate over residues 670–692 (VKKKSSSKKKKAVSKAKKNRGGK).

It belongs to the RNR ribonuclease family. RNase R subfamily.

The protein resides in the cytoplasm. The catalysed reaction is Exonucleolytic cleavage in the 3'- to 5'-direction to yield nucleoside 5'-phosphates.. Functionally, 3'-5' exoribonuclease that releases 5'-nucleoside monophosphates and is involved in maturation of structured RNAs. The sequence is that of Ribonuclease R from Chlamydia muridarum (strain MoPn / Nigg).